The following is a 439-amino-acid chain: Ribosomal protein uS12 methylthiotransferase RimO (439 aa).

The MTTase N-terminal domain maps to 4-114; the sequence is PKVGFVSLGC…VVRAVHGVAP (111 aa). 6 residues coordinate [4Fe-4S] cluster: C13, C49, C78, C147, C151, and C154. The region spanning 133–370 is the Radical SAM core domain; that stretch reads LTPRHYAYLK…MEHQQAISTA (238 aa). Positions 373–439 constitute a TRAM domain; that stretch reads STRVGREIDV…EYDLWGERIA (67 aa).

This sequence belongs to the methylthiotransferase family. RimO subfamily. It depends on [4Fe-4S] cluster as a cofactor.

The protein resides in the cytoplasm. The enzyme catalyses L-aspartate(89)-[ribosomal protein uS12]-hydrogen + (sulfur carrier)-SH + AH2 + 2 S-adenosyl-L-methionine = 3-methylsulfanyl-L-aspartate(89)-[ribosomal protein uS12]-hydrogen + (sulfur carrier)-H + 5'-deoxyadenosine + L-methionine + A + S-adenosyl-L-homocysteine + 2 H(+). Its function is as follows. Catalyzes the methylthiolation of an aspartic acid residue of ribosomal protein uS12. This is Ribosomal protein uS12 methylthiotransferase RimO from Bordetella parapertussis (strain 12822 / ATCC BAA-587 / NCTC 13253).